The primary structure comprises 178 residues: Orotate phosphoribosyltransferase (178 aa).

Residues arginine 92, lysine 93, lysine 96, and glutamate 118–serine 126 contribute to the 5-phospho-alpha-D-ribose 1-diphosphate site. Residues threonine 122 and arginine 150 each coordinate orotate.

The protein belongs to the purine/pyrimidine phosphoribosyltransferase family. PyrE subfamily. In terms of assembly, homodimer. It depends on Mg(2+) as a cofactor.

The catalysed reaction is orotidine 5'-phosphate + diphosphate = orotate + 5-phospho-alpha-D-ribose 1-diphosphate. It functions in the pathway pyrimidine metabolism; UMP biosynthesis via de novo pathway; UMP from orotate: step 1/2. Its function is as follows. Catalyzes the transfer of a ribosyl phosphate group from 5-phosphoribose 1-diphosphate to orotate, leading to the formation of orotidine monophosphate (OMP). The sequence is that of Orotate phosphoribosyltransferase from Archaeoglobus fulgidus (strain ATCC 49558 / DSM 4304 / JCM 9628 / NBRC 100126 / VC-16).